The following is a 256-amino-acid chain: EFLTYMNKLYKEGLIDQEMPINTSAKAIEKFSSGKAAIFKQAYWNAGTTEKALKKNDPNAKTAIIPYLKDKSGKASTFVKANTTWFVTIPKVSKHKEDAVKFLDLKLKPDNFIEIAIGKQGEHHEIKDGKYYPILPKFNDELNNGSGFLTGVDYKKYPDYWQARVRKDPVLQAFFEEINKNAQGIMVTDPLAKAPPIADISKNKQKLDKFQTDSMLKFISGSDPLANYDQFLTKWKADGGEAMTKAANEWFKNAKK.

It to B.subtilis LplA.

This is an uncharacterized protein from Niallia circulans (Bacillus circulans).